Consider the following 317-residue polypeptide: Putative 2-hydroxyacid dehydrogenase SAB2178 (317 aa).

Residues 155–156 (EI), 234–236 (ASR), and Asp260 each bind NAD(+). Residue Arg236 is part of the active site. Glu265 is an active-site residue. The active-site Proton donor is His283. Residue 283–286 (HIGN) coordinates NAD(+).

The protein belongs to the D-isomer specific 2-hydroxyacid dehydrogenase family.

The polypeptide is Putative 2-hydroxyacid dehydrogenase SAB2178 (Staphylococcus aureus (strain bovine RF122 / ET3-1)).